We begin with the raw amino-acid sequence, 230 residues long: Urease accessory protein UreF (230 aa).

This sequence belongs to the UreF family. As to quaternary structure, ureD, UreF and UreG form a complex that acts as a GTP-hydrolysis-dependent molecular chaperone, activating the urease apoprotein by helping to assemble the nickel containing metallocenter of UreC. The UreE protein probably delivers the nickel.

Its subcellular location is the cytoplasm. In terms of biological role, required for maturation of urease via the functional incorporation of the urease nickel metallocenter. The protein is Urease accessory protein UreF of Cupriavidus necator (strain ATCC 17699 / DSM 428 / KCTC 22496 / NCIMB 10442 / H16 / Stanier 337) (Ralstonia eutropha).